Consider the following 277-residue polypeptide: Large ribosomal subunit protein uL2 (277 aa).

The disordered stretch occupies residues 219 to 277 (TVRGSVMNPNDHPHGGGEGKAPVGRKAPSTPWGKPALGLKTRNKKAKSDKLIVRRRNEK). A compositionally biased stretch (basic and acidic residues) spans 264 to 277 (AKSDKLIVRRRNEK).

Belongs to the universal ribosomal protein uL2 family. In terms of assembly, part of the 50S ribosomal subunit. Forms a bridge to the 30S subunit in the 70S ribosome.

Its function is as follows. One of the primary rRNA binding proteins. Required for association of the 30S and 50S subunits to form the 70S ribosome, for tRNA binding and peptide bond formation. It has been suggested to have peptidyltransferase activity; this is somewhat controversial. Makes several contacts with the 16S rRNA in the 70S ribosome. The polypeptide is Large ribosomal subunit protein uL2 (Streptococcus pyogenes serotype M1).